Reading from the N-terminus, the 84-residue chain is UPF0457 protein BCE33L2961 (84 aa).

Belongs to the UPF0457 family.

The sequence is that of UPF0457 protein BCE33L2961 from Bacillus cereus (strain ZK / E33L).